We begin with the raw amino-acid sequence, 117 residues long: Protein RALF-like 32 (117 aa).

The N-terminal stretch at 1–26 (MEIKPSRIFSTITIFFLCLLLAHVTS) is a signal peptide. Positions 27 to 64 (KASSSSLCNGSVAECSSMVETEEMSVIMESWSSQRLTE) are cleaved as a propeptide — removed in mature form. N-linked (GlcNAc...) asparagine glycosylation is present at Asn-35. The tract at residues 77-107 (RNQPACDGGKRGESYSTQCLPPPSNPYSRGC) is disordered. 2 disulfides stabilise this stretch: Cys-82–Cys-95 and Cys-107–Cys-113.

It belongs to the plant rapid alkalinization factor (RALF) family. Proteolytically cleaved, probably by S1P, a subtilisin-like serine protease (subtilase).

It localises to the secreted. In terms of biological role, cell signaling peptide that may regulate plant stress, growth, and development. Mediates a rapid alkalinization of extracellular space by mediating a transient increase in the cytoplasmic Ca(2+) concentration leading to a calcium-dependent signaling events through a cell surface receptor and a concomitant activation of some intracellular mitogen-activated protein kinases. This chain is Protein RALF-like 32 (RALFL32), found in Arabidopsis thaliana (Mouse-ear cress).